Reading from the N-terminus, the 332-residue chain is Ferredoxin--NADP reductase (332 aa).

FAD contacts are provided by D33, Q41, Y46, A86, I121, D282, and S325.

This sequence belongs to the ferredoxin--NADP reductase type 2 family. Homodimer. It depends on FAD as a cofactor.

The catalysed reaction is 2 reduced [2Fe-2S]-[ferredoxin] + NADP(+) + H(+) = 2 oxidized [2Fe-2S]-[ferredoxin] + NADPH. In Metallosphaera sedula (strain ATCC 51363 / DSM 5348 / JCM 9185 / NBRC 15509 / TH2), this protein is Ferredoxin--NADP reductase.